The primary structure comprises 419 residues: Histidine--tRNA ligase (419 aa).

The protein belongs to the class-II aminoacyl-tRNA synthetase family. As to quaternary structure, homodimer.

Its subcellular location is the cytoplasm. It carries out the reaction tRNA(His) + L-histidine + ATP = L-histidyl-tRNA(His) + AMP + diphosphate + H(+). This Trichlorobacter lovleyi (strain ATCC BAA-1151 / DSM 17278 / SZ) (Geobacter lovleyi) protein is Histidine--tRNA ligase.